Consider the following 948-residue polypeptide: Protocadherin alpha-2 (948 aa).

A signal peptide spans 1 to 22 (MASSIRRGRGAWTRLLSLLLLA). The Extracellular segment spans residues 23–697 (AWEVGSGQLR…GSEATLVDVN (675 aa)). Cadherin domains lie at 30–133 (QLRY…PPIF), 157–242 (ASDA…EPTF), 243–350 (AQSV…TPEV), 351–455 (SITS…APAF), 456–565 (AQPE…APAL), and 588–678 (GHVV…APKA). N-linked (GlcNAc...) asparagine glycosylation is found at N257, N265, N362, and N548. The chain crosses the membrane as a helical span at residues 698–718 (VYLIIAICAVSSLLVLTVLLY). At 719–948 (TALRCSVPPT…GNSTTDNSDQ (230 aa)) the chain is on the cytoplasmic side. The PXXP 1 repeat unit spans residues 734 to 737 (PGKP). A 5 X 4 AA repeats of P-X-X-P region spans residues 734-892 (PGKPTLVCSS…PDKFIIPGSP (159 aa)). 3 disordered regions span residues 754 to 801 (RRQR…RQPN), 829 to 854 (GPGG…EVSP), and 868 to 948 (KYGP…NSDQ). Residues 783–795 (AEEKQLSESEYVG) are compositionally biased toward basic and acidic residues. PXXP repeat units follow at residues 797–800 (PRQP), 830–833 (PGGP), 871–874 (PGNP), and 889–892 (PGSP). Residues 907–921 (DKSDFITFGKKEETK) are compositionally biased toward basic and acidic residues.

The protein resides in the cell membrane. Functionally, potential calcium-dependent cell-adhesion protein. May be involved in the establishment and maintenance of specific neuronal connections in the brain. The chain is Protocadherin alpha-2 (PCDHA2) from Homo sapiens (Human).